The sequence spans 332 residues: Arrestin domain-containing protein 5 (332 aa).

The segment at 311 to 332 (SNQTAAGCRTRAPLPVSPDQQN) is disordered.

It belongs to the arrestin family.

The protein localises to the membrane. In terms of biological role, plays an essential role in spermatogenesis. May be involved in the anchoring of the sperm head to the tail during spermatogenesis by affecting SEC22A-mediated SUN5 and NDC1 transport and localization. The chain is Arrestin domain-containing protein 5 (ARRDC5) from Bos taurus (Bovine).